The primary structure comprises 567 residues: Sensor histidine kinase MtrB (567 aa).

Positions 1-15 are enriched in basic residues; that stretch reads MIFGSRRRIRGRRGR. The segment at 1 to 20 is disordered; sequence MIFGSRRRIRGRRGRSGPMT. A run of 2 helical transmembrane segments spans residues 42-62 and 213-233; these read VVALTLGLSLAVILALGFVLT and GTMATGGLVLLVLLAGIALLV. Residues 235–287 enclose the HAMP domain; sequence RQVVVPVRSASRIAERFAEGHLSERMPVRGEDDMARLAVSFNDMAESLSRQIA. The Histidine kinase domain maps to 302–519; it reads DVSHELRTPL…CFRLTLPLVR (218 aa). Residue His305 is modified to Phosphohistidine; by autocatalysis. Residues 526–567 are disordered; it reads SPLPMKPIPQPVLQPVAQPNPQPMPPEYKERQRPREHAEWSG. Residues 529-551 are compositionally biased toward pro residues; it reads PMKPIPQPVLQPVAQPNPQPMPP. Basic and acidic residues predominate over residues 552 to 567; it reads EYKERQRPREHAEWSG.

Its subcellular location is the cell membrane. It catalyses the reaction ATP + protein L-histidine = ADP + protein N-phospho-L-histidine.. Its function is as follows. Member of the two-component regulatory system MtrA/MtrB. Seems to function as a membrane-associated protein kinase that phosphorylates MtrA in response to environmental signals. The protein is Sensor histidine kinase MtrB (mtrB) of Mycobacterium bovis (strain ATCC BAA-935 / AF2122/97).